The chain runs to 398 residues: Acetate kinase (398 aa).

Residue asparagine 7 coordinates Mg(2+). Lysine 14 is an ATP binding site. Substrate is bound at residue arginine 85. Aspartate 142 serves as the catalytic Proton donor/acceptor. ATP is bound by residues 202–206 (HLGNG), 277–279 (DMR), and 325–329 (GIGEN). A Mg(2+)-binding site is contributed by glutamate 379.

The protein belongs to the acetokinase family. As to quaternary structure, homodimer. It depends on Mg(2+) as a cofactor. Mn(2+) serves as cofactor.

Its subcellular location is the cytoplasm. The enzyme catalyses acetate + ATP = acetyl phosphate + ADP. The protein operates within metabolic intermediate biosynthesis; acetyl-CoA biosynthesis; acetyl-CoA from acetate: step 1/2. In terms of biological role, catalyzes the formation of acetyl phosphate from acetate and ATP. Can also catalyze the reverse reaction. The polypeptide is Acetate kinase (Deinococcus radiodurans (strain ATCC 13939 / DSM 20539 / JCM 16871 / CCUG 27074 / LMG 4051 / NBRC 15346 / NCIMB 9279 / VKM B-1422 / R1)).